A 217-amino-acid chain; its full sequence is Small ribosomal subunit protein uS3 (217 aa).

The 71-residue stretch at 40–110 (IRDVINKGFN…EVYINIHEVR (71 aa)) folds into the KH type-2 domain.

The protein belongs to the universal ribosomal protein uS3 family. In terms of assembly, part of the 30S ribosomal subunit. Forms a tight complex with proteins S10 and S14.

Binds the lower part of the 30S subunit head. Binds mRNA in the 70S ribosome, positioning it for translation. The chain is Small ribosomal subunit protein uS3 from Rickettsia massiliae (strain Mtu5).